Reading from the N-terminus, the 185-residue chain is Ribosome-recycling factor (185 aa).

The protein belongs to the RRF family.

It is found in the cytoplasm. Functionally, responsible for the release of ribosomes from messenger RNA at the termination of protein biosynthesis. May increase the efficiency of translation by recycling ribosomes from one round of translation to another. In Pseudothermotoga lettingae (strain ATCC BAA-301 / DSM 14385 / NBRC 107922 / TMO) (Thermotoga lettingae), this protein is Ribosome-recycling factor.